We begin with the raw amino-acid sequence, 294 residues long: Nucleotide-binding protein Dde_1774 (294 aa).

ATP is bound at residue 14–21; it reads GLSGAGKS. Position 66 to 69 (66 to 69) interacts with GTP; that stretch reads DLRQ.

It belongs to the RapZ-like family.

In terms of biological role, displays ATPase and GTPase activities. The polypeptide is Nucleotide-binding protein Dde_1774 (Oleidesulfovibrio alaskensis (strain ATCC BAA-1058 / DSM 17464 / G20) (Desulfovibrio alaskensis)).